The primary structure comprises 885 residues: Insulin receptor substrate 1-A (885 aa).

Residues 1–56 enclose the IRS-type PTB domain; sequence MNIRRCGHSENFFFIEVGRSAVTGAGEFWMQVDDSVVAQNMHETILEAMKALSDEF. The tract at residues 56–225 is disordered; the sequence is FRPRSKSQSS…GGFISSDEYG (170 aa). Composition is skewed to low complexity over residues 61–75, 99–109, 176–197, and 205–217; these read KSQS…ISVP, SATATSPAGGA, SPSA…GSTS, and SSAS…SDGG. Ser104 carries the post-translational modification Phosphoserine. Tyr257 carries the post-translational modification Phosphotyrosine; by INSR. The YXXM motif 1 signature appears at 257–260; it reads YICM. Composition is skewed to polar residues over residues 263–276 and 296–313; these read SSSH…QRYQ and SSGT…PSQS. Disordered regions lie at residues 263-282 and 293-313; these read SSSH…RGEE and RTHS…PSQS. 5 consecutive short sequence motifs (YXXM motif) follow at residues 318 to 321, 364 to 367, 381 to 384, 409 to 412, and 451 to 454; these read YTEM, YMPM, YMMM, and YINM. 2 positions are modified to phosphotyrosine; by INSR: Tyr364 and Tyr381. Phosphotyrosine is present on Tyr409. The interval 501 to 581 is disordered; the sequence is NLRISANSGH…LPPEPKSPGE (81 aa). Over residues 504-515 the composition is skewed to polar residues; it reads ISANSGHNLYTE. The span at 516 to 526 shows a compositional bias: low complexity; that stretch reads DSSSSSTSSDS. 2 positions are modified to phosphotyrosine; by INSR: Tyr582 and Tyr620. The segment at 582 to 584 is GRB2-binding; that stretch reads YVN. Positions 620–623 match the YXXM motif 7 motif; the sequence is YMNM. The span at 637-660 shows a compositional bias: polar residues; the sequence is TSSYEPPNKPVNSVCPTETCSSSR. Residues 637–665 form a disordered region; that stretch reads TSSYEPPNKPVNSVCPTETCSSSRPPIRG. Position 672 is a phosphotyrosine; by INSR (Tyr672). Short sequence motifs (YXXM motif) lie at residues 672–675 and 706–709; these read YMSM and YAEM. The disordered stretch occupies residues 732–803; the sequence is ASRSSLLGQG…SGEDVKRHSS (72 aa). Polar residues-rich tracts occupy residues 743-758 and 777-792; these read GPSA…NRNP and ETFS…TTGP. Residues Tyr834 and Tyr866 each carry the phosphotyrosine; by INSR modification.

Interacts with the NPXY motif of tyrosine-phosphorylated igf1r and insr via the PTB domain. Binds to phosphatidylinositol 3-kinase p85 subunit at a low level in vitro prior to phosphorylation. Binding is greatly enhanced following tyrosine phosphorylation by insr and probably occurs via the phosphorylated YXXM motifs. Phosphorylation of Tyr-582 is required for grb2-binding.

In terms of biological role, may mediate the control of various cellular processes by insulin. When phosphorylated by the insulin receptor binds specifically to various cellular proteins containing SH2 domains such as phosphatidylinositol 3-kinase p85 subunit or grb2. Activates phosphatidylinositol 3-kinase when bound to the regulatory p85 subunit. This Xenopus laevis (African clawed frog) protein is Insulin receptor substrate 1-A (irs1-a).